We begin with the raw amino-acid sequence, 167 residues long: SsrA-binding protein (167 aa).

The segment covering 139–158 has biased composition (basic and acidic residues); it reads QNHDKRDAAKDRDWQRDKQR. Residues 139–167 are disordered; sequence QNHDKRDAAKDRDWQRDKQRVMRRHNRDA.

This sequence belongs to the SmpB family.

The protein localises to the cytoplasm. In terms of biological role, required for rescue of stalled ribosomes mediated by trans-translation. Binds to transfer-messenger RNA (tmRNA), required for stable association of tmRNA with ribosomes. tmRNA and SmpB together mimic tRNA shape, replacing the anticodon stem-loop with SmpB. tmRNA is encoded by the ssrA gene; the 2 termini fold to resemble tRNA(Ala) and it encodes a 'tag peptide', a short internal open reading frame. During trans-translation Ala-aminoacylated tmRNA acts like a tRNA, entering the A-site of stalled ribosomes, displacing the stalled mRNA. The ribosome then switches to translate the ORF on the tmRNA; the nascent peptide is terminated with the 'tag peptide' encoded by the tmRNA and targeted for degradation. The ribosome is freed to recommence translation, which seems to be the essential function of trans-translation. The polypeptide is SsrA-binding protein (Xanthomonas axonopodis pv. citri (strain 306)).